The primary structure comprises 223 residues: Octanoyltransferase (223 aa).

The 186-residue stretch at 31–216 (GQIGDTLLLL…QIGEVFALEP (186 aa)) folds into the BPL/LPL catalytic domain. Residues 76–83 (RGGEVTYH), 145–147 (AIG), and 159–161 (GLA) each bind substrate. Catalysis depends on C177, which acts as the Acyl-thioester intermediate.

Belongs to the LipB family.

Its subcellular location is the cytoplasm. The catalysed reaction is octanoyl-[ACP] + L-lysyl-[protein] = N(6)-octanoyl-L-lysyl-[protein] + holo-[ACP] + H(+). It functions in the pathway protein modification; protein lipoylation via endogenous pathway; protein N(6)-(lipoyl)lysine from octanoyl-[acyl-carrier-protein]: step 1/2. Functionally, catalyzes the transfer of endogenously produced octanoic acid from octanoyl-acyl-carrier-protein onto the lipoyl domains of lipoate-dependent enzymes. Lipoyl-ACP can also act as a substrate although octanoyl-ACP is likely to be the physiological substrate. The chain is Octanoyltransferase from Chloroflexus aurantiacus (strain ATCC 29366 / DSM 635 / J-10-fl).